The primary structure comprises 599 residues: Cartilage intermediate layer protein 1 (599 aa).

Asn-47, Asn-416, and Asn-472 each carry an N-linked (GlcNAc...) asparagine glycan. Residues 550–560 (QSTSARPSPAS) show a composition bias toward polar residues. Positions 550-599 (QSTSARPSPASTVRGRAPSRRQRASSGSQRQPRGVASLRFPGVAQQPLSN) are disordered. Low complexity predominate over residues 573–583 (ASSGSQRQPRG).

In terms of assembly, monomer. Interacts with TGFB1. In terms of processing, cleaved into 2 chains possibly by a furin-like protease upon or preceding secretion. Specifically expressed in cartilage. Expressed at lower level in young cartilage than in adult cartilage. In adult cartilage, it is highly expressed throughout middeep zones.

The protein localises to the secreted. Its subcellular location is the extracellular space. It is found in the extracellular matrix. Functionally, probably plays a role in cartilage scaffolding. May act by antagonizing TGF-beta1 (TGFB1) and IGF1 functions. Has the ability to suppress IGF1-induced proliferation and sulfated proteoglycan synthesis, and inhibits ligand-induced IGF1R autophosphorylation. May inhibit TGFB1-mediated induction of cartilage matrix genes via its interaction with TGFB1. Overexpression may lead to impair chondrocyte growth and matrix repair and indirectly promote inorganic pyrophosphate (PPi) supersaturation in aging and osteoarthritis cartilage. The sequence is that of Cartilage intermediate layer protein 1 (CILP) from Sus scrofa (Pig).